We begin with the raw amino-acid sequence, 1987 residues long: Transcription factor 20 (1987 aa).

A compositionally biased stretch (polar residues) spans 1 to 22 (MQSFREQSSYHGNQQSYPQEVH). Disordered regions lie at residues 1-79 (MQSF…QGYQ), 96-432 (DTVA…GNVP), 446-481 (LSPT…DPGL), 502-816 (LLSD…GTAR), and 844-891 (PHWG…SLSE). Over residues 51-74 (TGSSSSGRRGTAAAAAAMASETSG) the composition is skewed to low complexity. The residue at position 59 (arginine 59) is an Omega-N-methylarginine. Over residues 121-142 (QGSSFGNQYASEGHVSQFQAQH) the composition is skewed to polar residues. Residues 163 to 205 (SAQYQQQASSQQQQQQQQQQQQQQQQQQQQVQQLRQQLYQSHQ) are compositionally biased toward low complexity. Polar residues predominate over residues 206 to 235 (PLPQTTGQPASGSSHLQPMQRPSTLPSSAG). Residues 248–277 (QSSASSSSSSSFPSPQRFSQSGQSYDGSYS) show a composition bias toward low complexity. Positions 289 to 311 (VGSNAQAYGTQSNYSYQPQSMKN) are enriched in polar residues. Residue lysine 316 forms a Glycyl lysine isopeptide (Lys-Gly) (interchain with G-Cter in SUMO2) linkage. The span at 322-354 (QQGQQQQQQQPQPQQQQPQQQQQQQQQQQHPPQ) shows a compositional bias: low complexity. Residues 357–377 (MQYTNAATKMPLQSQVGQYNQ) show a composition bias toward polar residues. A compositionally biased stretch (low complexity) spans 396 to 416 (SNPSPAASVVQSPSCSSTPSP). A compositionally biased stretch (polar residues) spans 417–432 (LMQSGENLQCGQGNVP). Residues 446 to 456 (LSPTPSMMPSP) show a composition bias toward low complexity. Phosphoserine is present on residues serine 447 and serine 458. Composition is skewed to polar residues over residues 526–537 (SCTNSEGSSQPE), 566–576 (LSGQSTSSDTT), and 585–605 (AGSS…TSPA). 4 positions are modified to phosphoserine: serine 567, serine 588, serine 603, and serine 612. The span at 618-627 (TSLSSEGNTK) shows a compositional bias: polar residues. Residue lysine 631 is modified to N6-acetyllysine. Basic and acidic residues predominate over residues 645–657 (RVEKSGGQDKGSQ). A compositionally biased stretch (polar residues) spans 666 to 682 (RPPSNSGVKEISHTSLP). The residue at position 669 (serine 669) is a Phosphoserine. Residues 693-715 (GNKNGDNNSSNHNGEGNGPSSHS) are compositionally biased toward low complexity. The segment covering 722 to 731 (TGRTEPSKSP) has biased composition (polar residues). Residues lysine 739, lysine 762, lysine 777, lysine 852, lysine 861, and lysine 873 each participate in a glycyl lysine isopeptide (Lys-Gly) (interchain with G-Cter in SUMO2) cross-link. Residues 761–777 (EKGDFGSHGERKGRNEK) show a composition bias toward basic and acidic residues. Serine 900 carries the phosphoserine modification. Residues lysine 949 and lysine 951 each participate in a glycyl lysine isopeptide (Lys-Gly) (interchain with G-Cter in SUMO2) cross-link. The interval 949-1065 (KLKSQSGQIK…GDPHHMNPHM (117 aa)) is disordered. Residue lysine 958 forms a Glycyl lysine isopeptide (Lys-Gly) (interchain with G-Cter in SUMO1); alternate linkage. Residue lysine 958 forms a Glycyl lysine isopeptide (Lys-Gly) (interchain with G-Cter in SUMO2); alternate linkage. Over residues 974–989 (KSGDHCHPTSIKHETY) the composition is skewed to basic and acidic residues. A Glycyl lysine isopeptide (Lys-Gly) (interchain with G-Cter in SUMO2) cross-link involves residue lysine 985. Serine 994 and serine 1033 each carry phosphoserine. Lysine 1043 participates in a covalent cross-link: Glycyl lysine isopeptide (Lys-Gly) (interchain with G-Cter in SUMO2). Arginine 1052 bears the Omega-N-methylarginine mark. Serine 1081 carries the post-translational modification Phosphoserine. Residues lysine 1114, lysine 1126, lysine 1165, lysine 1201, lysine 1206, lysine 1211, lysine 1238, lysine 1259, lysine 1295, and lysine 1302 each participate in a glycyl lysine isopeptide (Lys-Gly) (interchain with G-Cter in SUMO2) cross-link. Residues 1136–1372 (VIAAAQHRQE…SPAKTKILPP (237 aa)) are disordered. Residues 1158-1170 (DRVRSPLKNDKDG) are compositionally biased toward basic and acidic residues. A leucine-zipper region spans residues 1198-1219 (LPAKSMELKHSSQKLQESCWDL). Residues 1282 to 1295 (RRRVRSFISPIPSK) carry the Nuclear localization signal motif. Composition is skewed to basic and acidic residues over residues 1305–1321 (NADD…EGAD) and 1332–1346 (HSQD…DSSK). Serine 1333 carries the post-translational modification Phosphoserine. A Glycyl lysine isopeptide (Lys-Gly) (interchain with G-Cter in SUMO2) cross-link involves residue lysine 1337. Serine 1363 is subject to Phosphoserine. Lysine 1366 is covalently cross-linked (Glycyl lysine isopeptide (Lys-Gly) (interchain with G-Cter in SUMO2)). Phosphoserine is present on serine 1389. Residues 1415-1434 (SLKSGPPEGGTVATQEAEME) form a disordered region. Glycyl lysine isopeptide (Lys-Gly) (interchain with G-Cter in SUMO2) cross-links involve residues lysine 1417, lysine 1437, lysine 1456, and lysine 1474. The tract at residues 1446–1636 (SVTNQESNVE…KQAVPIVEPQ (191 aa)) is disordered. The span at 1463 to 1479 (EEWRGSGDDKVKTEAHV) shows a compositional bias: basic and acidic residues. Residues 1481 to 1501 (TASTGKEPSGTMTSTASQKPG) are compositionally biased toward polar residues. Lysine 1538 is covalently cross-linked (Glycyl lysine isopeptide (Lys-Gly) (interchain with G-Cter in SUMO2)). The residue at position 1550 (serine 1550) is a Phosphoserine. Residue lysine 1552 forms a Glycyl lysine isopeptide (Lys-Gly) (interchain with G-Cter in SUMO2) linkage. Positions 1565-1579 (GKKKGRPIGSVNKQK) form a DNA-binding region, a.T hook. Over residues 1584–1594 (QPPPPPQPPQM) the composition is skewed to pro residues. Residues 1604 to 1628 (KPKKQRQRRERRKPGAQPRKRKTKQ) carry the Nuclear localization signal motif. A compositionally biased stretch (basic residues) spans 1606–1627 (KKQRQRRERRKPGAQPRKRKTK). Residue lysine 1641 forms a Glycyl lysine isopeptide (Lys-Gly) (interchain with G-Cter in SUMO2) linkage. Disordered stretches follow at residues 1685-1710 (QTKL…SKVL) and 1760-1865 (TLPK…GPEL). Phosphoserine is present on serine 1697. Phosphothreonine occurs at positions 1699, 1790, and 1792. Positions 1812 to 1819 (RFKRRHRS) match the Nuclear localization signal motif. Over residues 1850–1859 (DTKPSVPTTS) the composition is skewed to polar residues. The C2HC pre-PHD-type; degenerate zinc finger occupies 1856 to 1892 (PTTSEGGPELELQIPELPLDSNEFWVHEGCILWANGI). The PHD-type zinc finger occupies 1912 to 1960 (MKCSHCQEAGATLGCYNKGCSFRYHYPCAIDADCLLHEENFSVRCPKHK). The tract at residues 1966–1987 (PLPPLQNKTAKGSLSTEQSERG) is disordered. Over residues 1971–1987 (QNKTAKGSLSTEQSERG) the composition is skewed to polar residues.

As to quaternary structure, homodimer. Interacts with RNF4 and JUN. Binds to the regulatory region of MMP3. In terms of tissue distribution, expressed in brain, lung, liver, kidney and testes.

Its subcellular location is the nucleus. Functionally, transcriptional activator that binds to the regulatory region of MMP3 and thereby controls stromelysin expression. It stimulates the activity of various transcriptional activators such as JUN, SP1, PAX6 and ETS1, suggesting a function as a coactivator. This Mus musculus (Mouse) protein is Transcription factor 20 (Tcf20).